Consider the following 426-residue polypeptide: uncharacterized protein (426 aa).

This is an uncharacterized protein from Corynebacterium glutamicum (strain ATCC 13032 / DSM 20300 / JCM 1318 / BCRC 11384 / CCUG 27702 / LMG 3730 / NBRC 12168 / NCIMB 10025 / NRRL B-2784 / 534).